Reading from the N-terminus, the 367-residue chain is Cyclin-dependent kinase 5 activator 2 (367 aa).

Residues 1–11 show a composition bias toward polar residues; sequence MGTVLSLSPAS. 4 disordered regions span residues 1 to 56, 72 to 98, 131 to 175, and 329 to 367; these read MGTV…RLKR, ASAK…LVQQ, AAAT…GSPR, and GEAA…NLDR. Gly2 carries the N-myristoyl glycine lipid modification. Residues 74–84 are compositionally biased toward basic residues; the sequence is AKKKKGSKKVT. The residue at position 84 (Thr84) is a Phosphothreonine. Over residues 131–148 the composition is skewed to low complexity; sequence AAATCEPPSGGSAAAQPP. Residues 154 to 171 are compositionally biased toward pro residues; sequence KPPPPPPPAPQVAPPVPG. Low complexity predominate over residues 342-357; the sequence is GAPAASSAARDSCAAG.

It belongs to the cyclin-dependent kinase 5 activator family. As to quaternary structure, heterodimer of a catalytic subunit and a regulatory subunit. In terms of processing, myristoylated. The Gly-2-Ala mutant is absent of the cell periphery, suggesting that a proper myristoylation signal is essential for the proper distribution of CDK5R2 (p39). Brain and neuron specific.

It localises to the cell membrane. In terms of biological role, activator of CDK5/TPKII. The chain is Cyclin-dependent kinase 5 activator 2 (CDK5R2) from Homo sapiens (Human).